The chain runs to 143 residues: 16 kDa calcium-binding protein (143 aa).

4 EF-hand domains span residues 2–37 (SEEKQWTEVFHAIDKDKNGFLTREEIAQCLKEVGVC), 41–71 (ADKIIKETDMNSDGKISLEEYLNALRKLPPR), 73–108 (KCVARWREVFQSIDKDGSGKVSIKELDEFLKTSGMD), and 109–143 (IDQNSLRNWMTQNDKNKDGELDYDEFLAYVRQTYK). Ca(2+) is bound by residues Asp15, Asp17, Asn19, Glu26, Asp49, Asn51, Asp53, Lys55, Glu60, Asp86, Asp88, Ser90, Lys92, Glu97, Asp122, Asn124, Asp126, Glu128, and Glu133.

As to expression, found in eggs.

Its function is as follows. Calcium-binding protein. The chain is 16 kDa calcium-binding protein from Schistosoma mansoni (Blood fluke).